Reading from the N-terminus, the 479-residue chain is Transcription factor CP2-like protein 1 (479 aa).

The region spanning 43–280 is the Grh/CP2 DB domain; the sequence is RLPPLQYVLC…PSPSYNGSPN (238 aa). Disordered stretches follow at residues 219–245 and 271–301; these read KPKG…KEKY and PSPS…LPVG. Basic and acidic residues predominate over residues 221–245; it reads KGADRKQKTDREKMEKRTAQEKEKY. An SAM2-like domain region spans residues 261–365; it reads PDVAYQVNSA…IRLFNAIKGR (105 aa). Residues 271 to 281 show a composition bias toward polar residues; sequence PSPSYNGSPNS.

The protein belongs to the grh/CP2 family. CP2 subfamily. As to quaternary structure, forms homohexamers via its SAM-like domain. Interacts with MTA1; which is indispensable for TFCP2l1-mediated self-renewal-promoting effect and endoderm-inhibiting action. In terms of tissue distribution, highly expressed in placental JEG-3 cells and very low levels of expression in non-steroidogenic cells. No expression was seen in adrenal NCI-H295A cells or in adrenal tissue.

Its subcellular location is the nucleus. Its function is as follows. Transcription factor that facilitates establishment and maintenance of pluripotency in embryonic stem cells (ESCs). With KLF2, acts as the major effector of self-renewal that mediates induction of pluripotency downstream of LIF/STAT3 and Wnt/beta-catenin signaling. Required for normal duct development in the salivary gland and kidney. Coordinates the development of the kidney collecting ducts intercalated (IC) and principal (PC) cells, which regulate acid-base and salt-water homeostasis, respectively. Regulates the expression of IC genes including subunits B1 and D2 of the V-ATPase complex, OXGR1, CA12, SLC4A1, AQP6 and IC-specific transcription factor FOXI1. Also regulates the expression of JAG1 and subsequent notch signaling in the collecting duct. JAG1 initiates notch signaling in PCs but inhibits notch signaling in ICs. Acts as a transcriptional suppressor that may suppress UBP1-mediated transcriptional activation. Modulates the placental expression of CYP11A1. The polypeptide is Transcription factor CP2-like protein 1 (TFCP2L1) (Homo sapiens (Human)).